The sequence spans 310 residues: tRNA uridine(34) hydroxylase (310 aa).

Residues 127–225 (KNQNTIVIDT…YLDDIPKEKN (99 aa)) enclose the Rhodanese domain. Residue cysteine 185 is the Cysteine persulfide intermediate of the active site.

Belongs to the TrhO family.

It catalyses the reaction uridine(34) in tRNA + AH2 + O2 = 5-hydroxyuridine(34) in tRNA + A + H2O. Catalyzes oxygen-dependent 5-hydroxyuridine (ho5U) modification at position 34 in tRNAs. This chain is tRNA uridine(34) hydroxylase, found in Prochlorococcus marinus (strain MIT 9312).